The following is a 73-amino-acid chain: Translational regulator CsrA (73 aa).

This sequence belongs to the CsrA/RsmA family. As to quaternary structure, homodimer; the beta-strands of each monomer intercalate to form a hydrophobic core, while the alpha-helices form wings that extend away from the core.

The protein resides in the cytoplasm. Its function is as follows. A translational regulator that binds mRNA to regulate translation initiation and/or mRNA stability. Usually binds in the 5'-UTR at or near the Shine-Dalgarno sequence preventing ribosome-binding, thus repressing translation. Its main target seems to be the major flagellin gene, while its function is anatagonized by FliW. The polypeptide is Translational regulator CsrA (Lachnospira eligens (strain ATCC 27750 / DSM 3376 / VPI C15-48 / C15-B4) (Eubacterium eligens)).